Here is a 198-residue protein sequence, read N- to C-terminus: MNKFATLAVFISVCLAVGSCNYGGQHAGHGYGHHRSISSYGQRGDGSAAAASSAAAAGGNDQRPVEIVAGPRYGGSEQLRPILLDSGYQGGHNEYGRGHGNIGHLVGGGSYGGHIAGGNHGGNYGGHQRGYGRPRWSVQPAGTTLLYPGQNSYRRYASPPEYTKVVLPVRAAPPVAKLYLPENNYGSHGGYHNEGPKY.

Positions 1–16 (MNKFATLAVFISVCLA) are cleaved as a signal peptide.

It belongs to the chorion protein S19 family.

Its subcellular location is the secreted. Its function is as follows. Chorion membrane (egg shell) protein; plays a role in protecting the egg from the environment. The protein is Chorion protein S19 (Cp19) of Drosophila virilis (Fruit fly).